A 321-amino-acid polypeptide reads, in one-letter code: Glucokinase (321 aa).

An ATP-binding site is contributed by alanine 9–threonine 14.

This sequence belongs to the bacterial glucokinase family.

It localises to the cytoplasm. It carries out the reaction D-glucose + ATP = D-glucose 6-phosphate + ADP + H(+). The chain is Glucokinase from Saccharophagus degradans (strain 2-40 / ATCC 43961 / DSM 17024).